A 171-amino-acid chain; its full sequence is Inosine/xanthosine triphosphatase (171 aa).

Thr-8–Lys-13 provides a ligand contact to substrate. Mg(2+) contacts are provided by Asp-38 and Gln-68.

The protein belongs to the YjjX NTPase family. In terms of assembly, homodimer. It depends on Mg(2+) as a cofactor. The cofactor is Mn(2+).

It carries out the reaction XTP + H2O = XDP + phosphate + H(+). The catalysed reaction is ITP + H2O = IDP + phosphate + H(+). In terms of biological role, phosphatase that hydrolyzes non-canonical purine nucleotides such as XTP and ITP to their respective diphosphate derivatives. Probably excludes non-canonical purines from DNA/RNA precursor pool, thus preventing their incorporation into DNA/RNA and avoiding chromosomal lesions. This is Inosine/xanthosine triphosphatase from Cronobacter sakazakii (strain ATCC BAA-894) (Enterobacter sakazakii).